We begin with the raw amino-acid sequence, 427 residues long: Histidinol dehydrogenase (427 aa).

NAD(+)-binding residues include Y125, Q186, and N209. Substrate contacts are provided by S234, Q256, and H259. The Zn(2+) site is built by Q256 and H259. Active-site proton acceptor residues include E325 and H326. Substrate is bound by residues H326, D359, E413, and H419. D359 serves as a coordination point for Zn(2+). A Zn(2+)-binding site is contributed by H419.

It belongs to the histidinol dehydrogenase family. The cofactor is Zn(2+).

The catalysed reaction is L-histidinol + 2 NAD(+) + H2O = L-histidine + 2 NADH + 3 H(+). It participates in amino-acid biosynthesis; L-histidine biosynthesis; L-histidine from 5-phospho-alpha-D-ribose 1-diphosphate: step 9/9. Its function is as follows. Catalyzes the sequential NAD-dependent oxidations of L-histidinol to L-histidinaldehyde and then to L-histidine. This chain is Histidinol dehydrogenase, found in Leptospira interrogans serogroup Icterohaemorrhagiae serovar copenhageni (strain Fiocruz L1-130).